The chain runs to 142 residues: Cellulose/chitin binding protein BQ2027_MB2009 (142 aa).

An N-terminal signal peptide occupies residues 1–37; sequence MAGLNIYVRRWRTALHATVSALIVAILGLAITPVASA. The CBM2 domain maps to 38 to 142; that stretch reads ATARATLSVT…CLLNGQYPCT (105 aa).

It localises to the secreted. The protein resides in the cell wall. It is found in the cell membrane. Its function is as follows. Carbohydrate binding protein that binds chitin and cellulose. Lacks enzymatic activity and does not hydrolyze chitin and cellulose. May interact with mycobacterial biofilms, which are rich in cellulose, and play a role in biofilm formation. Could also act as an adhesin, improving the initial attachment to host cells and aiding M.bovis during the initial stages of infection. May act as a virulence factor that modulates host immune responses and contributes to host immune evasion. This chain is Cellulose/chitin binding protein BQ2027_MB2009, found in Mycobacterium bovis (strain ATCC BAA-935 / AF2122/97).